Consider the following 281-residue polypeptide: Arabinose operon regulatory protein (281 aa).

Residues Pro8, Thr24, Arg38, Tyr82, and His93 each coordinate alpha-L-arabinopyanose. The HTH araC/xylS-type domain maps to 180–279 (RDACQYISDH…GASPSEFRAG (100 aa)). 2 DNA-binding regions (H-T-H motif) span residues 198 to 219 (ASVA…RQQL) and 246 to 269 (IATV…KKCT).

As to quaternary structure, homodimer.

The protein localises to the cytoplasm. Its function is as follows. Transcription factor that regulates the expression of several genes involved in the transport and metabolism of L-arabinose. The protein is Arabinose operon regulatory protein of Salmonella typhimurium (strain LT2 / SGSC1412 / ATCC 700720).